The primary structure comprises 86 residues: Large ribosomal subunit protein eL20 (86 aa).

The protein belongs to the eukaryotic ribosomal protein eL20 family. Part of the 50S ribosomal subunit. Binds 23S rRNA.

The chain is Large ribosomal subunit protein eL20 from Metallosphaera sedula (strain ATCC 51363 / DSM 5348 / JCM 9185 / NBRC 15509 / TH2).